The chain runs to 577 residues: MSKPELKEDKMLEVHFVGDDDVLNHILDREGGAKLKKERAQLLVNPKKIIKKPEYDLEEDDQEVLKDQNYVEIMGRDVQESLKNGSATGGGNKVYSFQNRKHSEKMAKLASELAKTPQKSVSFSLKNDPEITINVPQSSKGHSASDKVQPKNNDKSEFLSTAPRSLRKRLIVPRSHSDSESEYSASNSEDDEGVAQEHEEDTNAVIFSQKIQAQNRVVSAPVGKETPSKRMKRDKTSDLVEEYFEAHSSSKVLTSDRTLQKLKRAKLDQQTLRNLLSKVSPSFSAELKQLNQQYEKLFHKWMLQLHLGFNIVLYGLGSKRDLLERFRTTMLQDSIHVVINGFFPGISVKSVLNSITEEVLDHMGTFRSILDQLDWIVNKFKEDSSLELFLLIHNLDSQMLRGEKSQQIIGQLSSLHNIYLIASIDHLNAPLMWDHAKQSLFNWLWYETTTYSPYTEETSYENSLLVKQSGSLPLSSLTHVLRSLTPNARGIFRLLIKYQLDNQDNPSYIGLSFQDFYQQCREAFLVNSDLTLRAQLTEFRDHKLIRTKKGTDGVEYLLIPVDNGTLTDFLEKEEEEA.

An Involved in LRWD1-binding repeat occupies 1-100 (MSKPELKEDK…GNKVYSFQNR (100 aa)). The disordered stretch occupies residues 81–199 (SLKNGSATGG…DDEGVAQEHE (119 aa)). Thr116 is modified (phosphothreonine). A phosphoserine mark is found at Ser122 and Ser138. Residues 143-157 (SASDKVQPKNNDKSE) show a composition bias toward basic and acidic residues. Over residues 188 to 199 (SEDDEGVAQEHE) the composition is skewed to acidic residues. Residue Thr226 is modified to Phosphothreonine. 2 positions are modified to phosphoserine: Ser248 and Ser280.

It belongs to the ORC2 family. Component of ORC, a complex composed of at least 6 subunits: ORC1, ORC2, ORC3, ORC4, ORC5 and ORC6. ORC is regulated in a cell-cycle dependent manner. It is sequentially assembled at the exit from anaphase of mitosis and disassembled as cells enter S phase. Interacts with DBF4. Interacts with MCM10. Interacts with LRWD1 throughout the cell cycle; this interaction, which occurs only with non-ubiquitinated form of LRWD1, prevents LRWD1 ubiquitination and hence stabilizes the protein. Interacts with POLQ.

The protein localises to the nucleus. Its function is as follows. Component of the origin recognition complex (ORC) that binds origins of replication. DNA-binding is ATP-dependent. The specific DNA sequences that define origins of replication have not been identified yet. ORC is required to assemble the pre-replication complex necessary to initiate DNA replication. Binds histone H3 and H4 trimethylation marks H3K9me3, H3K20me3 and H4K27me3. Stabilizes LRWD1, by protecting it from ubiquitin-mediated proteasomal degradation. Also stabilizes ORC3. This Homo sapiens (Human) protein is Origin recognition complex subunit 2 (ORC2).